Reading from the N-terminus, the 207-residue chain is TM2 domain-containing protein 1 (207 aa).

Positions 1–37 (MAAAWPSGPSAPEAVTARLVGVLWFVSVTTGPWGAVA) are cleaved as a signal peptide. Topologically, residues 40–128 (AGGEESLKCE…YSYKVAVALS (89 aa)) are extracellular. Residues asparagine 72, asparagine 75, asparagine 87, and asparagine 96 are each glycosylated (N-linked (GlcNAc...) asparagine). Residues 118–166 (GYSYKVAVALSLFLGWLGADRFYLGYPALGLLKFCTVGFCGIGSLIDFI) form the TM2 domain. The chain crosses the membrane as a helical span at residues 129–149 (LFLGWLGADRFYLGYPALGLL). The Cytoplasmic portion of the chain corresponds to 150–153 (KFCT). The helical transmembrane segment at 154–174 (VGFCGIGSLIDFILISMQIVG) threads the bilayer. The Extracellular portion of the chain corresponds to 175–207 (PSDGSSYIIDYYGTRLTRLSITNETFRKTQLYP). N-linked (GlcNAc...) asparagine glycosylation occurs at asparagine 197.

The protein belongs to the TM2 family. Interacts with APP beta-APP42 (amyloid-beta protein 42). N-glycosylated. In terms of tissue distribution, widely expressed.

The protein localises to the membrane. Its function is as follows. May participate in amyloid-beta-induced apoptosis via its interaction with beta-APP42. This Homo sapiens (Human) protein is TM2 domain-containing protein 1 (TM2D1).